Here is a 1581-residue protein sequence, read N- to C-terminus: Pentafunctional AROM polypeptide (1581 aa).

The segment at 1–383 (MKEIIKLSIL…YEKKASSVSD (383 aa)) is 3-dehydroquinate synthase. Residues 43-45 (DSN), 80-83 (EKSK), 111-113 (GGV), and D116 each bind NAD(+). R127 is a binding site for 7-phospho-2-dehydro-3-deoxy-D-arabino-heptonate. Residue 136-137 (TT) participates in NAD(+) binding. Residues D143 and K149 each coordinate 7-phospho-2-dehydro-3-deoxy-D-arabino-heptonate. K158 serves as a coordination point for NAD(+). 7-phospho-2-dehydro-3-deoxy-D-arabino-heptonate is bound at residue N159. NAD(+)-binding positions include 176–179 (FLET) and N187. E191 contacts Zn(2+). 7-phospho-2-dehydro-3-deoxy-D-arabino-heptonate is bound by residues 191 to 194 (ELIK) and K249. E259 functions as the Proton acceptor; for 3-dehydroquinate synthase activity in the catalytic mechanism. 7-phospho-2-dehydro-3-deoxy-D-arabino-heptonate contacts are provided by residues 263–267 (RTLLN) and H270. Position 270 (H270) interacts with Zn(2+). H274 functions as the Proton acceptor; for 3-dehydroquinate synthase activity in the catalytic mechanism. Residues H286 and K355 each coordinate 7-phospho-2-dehydro-3-deoxy-D-arabino-heptonate. H286 is a binding site for Zn(2+). An EPSP synthase region spans residues 396–845 (LYGIPLNAFQ…WDILNSTFKV (450 aa)). The active-site For EPSP synthase activity is C827. The shikimate kinase stretch occupies residues 868-1065 (ECTIFLIGMR…LKKKRSYFLS (198 aa)). Residue 875–882 (GMRGAGKT) coordinates ATP. Residues 1066–1285 (LAFSDLENIF…IAPGQLSIKE (220 aa)) form a 3-dehydroquinase region. The active-site Proton acceptor; for 3-dehydroquinate dehydratase activity is the H1189. K1217 functions as the Schiff-base intermediate with substrate; for 3-dehydroquinate dehydratase activity in the catalytic mechanism. The interval 1298–1581 (EKKYFLFGKP…VKYAILGPNK (284 aa)) is shikimate dehydrogenase.

In the N-terminal section; belongs to the sugar phosphate cyclases superfamily. Dehydroquinate synthase family. This sequence in the 2nd section; belongs to the EPSP synthase family. The protein in the 3rd section; belongs to the shikimate kinase family. It in the 4th section; belongs to the type-I 3-dehydroquinase family. In the C-terminal section; belongs to the shikimate dehydrogenase family. In terms of assembly, homodimer. It depends on Zn(2+) as a cofactor.

It is found in the cytoplasm. The enzyme catalyses 7-phospho-2-dehydro-3-deoxy-D-arabino-heptonate = 3-dehydroquinate + phosphate. The catalysed reaction is 3-dehydroquinate = 3-dehydroshikimate + H2O. It carries out the reaction shikimate + NADP(+) = 3-dehydroshikimate + NADPH + H(+). It catalyses the reaction shikimate + ATP = 3-phosphoshikimate + ADP + H(+). The enzyme catalyses 3-phosphoshikimate + phosphoenolpyruvate = 5-O-(1-carboxyvinyl)-3-phosphoshikimate + phosphate. It participates in metabolic intermediate biosynthesis; chorismate biosynthesis; chorismate from D-erythrose 4-phosphate and phosphoenolpyruvate: step 2/7. Its pathway is metabolic intermediate biosynthesis; chorismate biosynthesis; chorismate from D-erythrose 4-phosphate and phosphoenolpyruvate: step 3/7. It functions in the pathway metabolic intermediate biosynthesis; chorismate biosynthesis; chorismate from D-erythrose 4-phosphate and phosphoenolpyruvate: step 4/7. The protein operates within metabolic intermediate biosynthesis; chorismate biosynthesis; chorismate from D-erythrose 4-phosphate and phosphoenolpyruvate: step 5/7. It participates in metabolic intermediate biosynthesis; chorismate biosynthesis; chorismate from D-erythrose 4-phosphate and phosphoenolpyruvate: step 6/7. Its function is as follows. The AROM polypeptide catalyzes 5 consecutive enzymatic reactions in prechorismate polyaromatic amino acid biosynthesis. This chain is Pentafunctional AROM polypeptide (arom), found in Pneumocystis carinii.